We begin with the raw amino-acid sequence, 180 residues long: Adenosine 5'-phosphosulfate reductase (180 aa).

[4Fe-4S] cluster-binding residues include C57, C58, C140, and C143. Catalysis depends on C168, which acts as the Nucleophile; cysteine thiosulfonate intermediate.

This sequence belongs to the PAPS reductase family. CysH subfamily. It depends on [4Fe-4S] cluster as a cofactor.

It is found in the cytoplasm. It carries out the reaction [thioredoxin]-disulfide + sulfite + AMP + 2 H(+) = adenosine 5'-phosphosulfate + [thioredoxin]-dithiol. The protein operates within sulfur metabolism; hydrogen sulfide biosynthesis; sulfite from sulfate. Functionally, catalyzes the formation of sulfite from adenosine 5'-phosphosulfate (APS) using thioredoxin as an electron donor. In Rhizobium tropici, this protein is Adenosine 5'-phosphosulfate reductase.